The primary structure comprises 375 residues: Tyrosine--tRNA ligase (375 aa).

L-tyrosine is bound by residues Y37, Y168, Q172, D175, and Q190. A 'KMSKS' region motif is present at residues 251-255 (KMSKS). Residue K254 participates in ATP binding.

This sequence belongs to the class-I aminoacyl-tRNA synthetase family. TyrS type 4 subfamily. As to quaternary structure, homodimer.

The protein resides in the cytoplasm. It carries out the reaction tRNA(Tyr) + L-tyrosine + ATP = L-tyrosyl-tRNA(Tyr) + AMP + diphosphate + H(+). Functionally, catalyzes the attachment of tyrosine to tRNA(Tyr) in a two-step reaction: tyrosine is first activated by ATP to form Tyr-AMP and then transferred to the acceptor end of tRNA(Tyr). The polypeptide is Tyrosine--tRNA ligase (Pyrococcus abyssi (strain GE5 / Orsay)).